Consider the following 342-residue polypeptide: N-acetyl-gamma-glutamyl-phosphate reductase (342 aa).

The active site involves Cys147.

It belongs to the NAGSA dehydrogenase family. Type 1 subfamily.

The protein localises to the cytoplasm. The enzyme catalyses N-acetyl-L-glutamate 5-semialdehyde + phosphate + NADP(+) = N-acetyl-L-glutamyl 5-phosphate + NADPH + H(+). It functions in the pathway amino-acid biosynthesis; L-arginine biosynthesis; N(2)-acetyl-L-ornithine from L-glutamate: step 3/4. Catalyzes the NADPH-dependent reduction of N-acetyl-5-glutamyl phosphate to yield N-acetyl-L-glutamate 5-semialdehyde. The protein is N-acetyl-gamma-glutamyl-phosphate reductase of Campylobacter jejuni subsp. jejuni serotype O:23/36 (strain 81-176).